The primary structure comprises 409 residues: Histidine--tRNA ligase (409 aa).

Belongs to the class-II aminoacyl-tRNA synthetase family.

Its subcellular location is the cytoplasm. The catalysed reaction is tRNA(His) + L-histidine + ATP = L-histidyl-tRNA(His) + AMP + diphosphate + H(+). This is Histidine--tRNA ligase (hisS) from Archaeoglobus fulgidus (strain ATCC 49558 / DSM 4304 / JCM 9628 / NBRC 100126 / VC-16).